We begin with the raw amino-acid sequence, 527 residues long: Cyclin-L1 (527 aa).

The segment at 1–37 (MASGPHPTSTAAAASASSAAPSAGGSSSGTTTTTTTT) is disordered. 2 cyclin-like regions span residues 89–191 (ELIQ…RVLK) and 204–288 (KIIV…ETLR). Thr326 is subject to Phosphothreonine. The disordered stretch occupies residues 327–527 (PALSTLGGFS…SRSGHGRHRR (201 aa)). Phosphoserine occurs at positions 336 and 339. Glycyl lysine isopeptide (Lys-Gly) (interchain with G-Cter in SUMO2) cross-links involve residues Lys340 and Lys348. Residues 343–353 (SPREVKAEEKS) show a composition bias toward basic and acidic residues. Residues Ser353 and Ser356 each carry the phosphoserine modification. The segment covering 362–371 (VKKEPEDRQQ) has biased composition (basic and acidic residues). A Glycyl lysine isopeptide (Lys-Gly) (interchain with G-Cter in SUMO2) cross-link involves residue Lys363. Ser375 is modified (phosphoserine). Composition is skewed to basic residues over residues 383–419 (DSKR…RRSR), 439–453 (RRHH…KAKH), 461–477 (SNRH…RSQS), and 487–499 (KKHR…HRDR). The segment at 391–433 (RSASRSRSRTRSRSRSHTPRRHYNNRRSRSGTYSSRSRSRSRS) is RS. Ser446 carries the post-translational modification Phosphoserine. Residues 500–509 (RERSRSFERS) show a composition bias toward basic and acidic residues. Basic residues predominate over residues 510–527 (HKGKHHGGSRSGHGRHRR).

It belongs to the cyclin family. Cyclin L subfamily. As to quaternary structure, interacts with POLR2A via its hyperphosphorylated C-terminal domain (CTD). Interacts with CDK11A, CDK11B, CDK12 and CDK13. May form a ternary complex with CDK11B and casein kinase II (CKII). Interacts with pre-mRNA-splicing factors, including at least SRSF1, SRSF2 AND SRSF7/SLU7. As to expression, ubiquitous with higher level in liver; expressed in striatal neurons.

The protein localises to the nucleus speckle. It localises to the nucleus. Its subcellular location is the nucleoplasm. In terms of biological role, involved in pre-mRNA splicing. Functions in association with cyclin-dependent kinases (CDKs). May play a role in the regulation of RNA polymerase II (pol II). Inhibited by the CDK-specific inhibitor CDKN1A/p21. This Rattus norvegicus (Rat) protein is Cyclin-L1 (Ccnl1).